The following is a 353-amino-acid chain: D-glycerol 3-phosphate phosphatase (353 aa).

The active-site Nucleophile is the Asp14. 3 residues coordinate Mg(2+): Asp14, Asp16, and Asp209. Asp16 serves as the catalytic Proton donor.

Belongs to the HAD-like hydrolase superfamily. In terms of assembly, homodimer. Mg(2+) serves as cofactor. Requires Co(2+) as cofactor. The cofactor is Mn(2+).

The enzyme catalyses sn-glycerol 1-phosphate + H2O = glycerol + phosphate. It participates in glycerolipid metabolism. In terms of biological role, dephosphorylates D-glycerol 3-phosphate (sn-glycerol 1-phosphate). Is the final enzyme involved in the recycling/catabolism of glycerophospholipid polar heads. To a lesser extent, is also able to act on glycerol 2-phosphate and D-ribulose 5-phosphate, but cannot use D-glyceraldehyde 3-phosphate, dihydroxyacetone-phosphate, UMP or GMP as substrates. The protein is D-glycerol 3-phosphate phosphatase of Mycobacterium tuberculosis (strain ATCC 25618 / H37Rv).